The primary structure comprises 415 residues: MKGSYKSRWVIVIVVVIAAIAAFWFWQGRNDSQSAAPGATKQAQQSPAGGRRGMRAGPLAPVQAATAVEQAVPRYLTGLGTITAANTVTVRSRVDGQLMALHFQEGQQVKAGDLLAEIDPSQFKVALAQAQGQLAKDKATLANARRDLSRYQQLAKTNLVSRQELDAQQALVSETEGTIKADEASVASAQLQLDWSRITAPVDGRVGLKQVDVGNQISSGDTTGIVVITQTHPIDLVFTLPESDIATVVQAQKAGKPLVVEAWDRTNSKKLSEGTLLSLDNQIDATTGTIKVKARFNNQDDALFPNQFVNARMLVDTEQNAVVIPTAALQMGNEGHFVWVLNSENKVSKHLVTPGIQDSQKVVIRAGISAGDRVVTDGIDRLTEGAKVEVVEAQSTTTPEEKATSREYAKKGARS.

The signal sequence occupies residues 1–21; sequence MKGSYKSRWVIVIVVVIAAIA. Residues 31–46 are compositionally biased toward polar residues; the sequence is DSQSAAPGATKQAQQS. 2 disordered regions span residues 31–56 and 391–415; these read DSQS…GMRA and VEAQ…GARS. Residues 399–415 show a composition bias toward basic and acidic residues; it reads PEEKATSREYAKKGARS.

It belongs to the membrane fusion protein (MFP) (TC 8.A.1) family. As to quaternary structure, part of a tripartite efflux system composed of MdtA, MdtB and MdtC.

It localises to the cell inner membrane. Functionally, the MdtABC tripartite complex confers resistance against novobiocin and deoxycholate. This Escherichia coli O45:K1 (strain S88 / ExPEC) protein is Multidrug resistance protein MdtA.